A 268-amino-acid chain; its full sequence is MSDAIRAVILGIIEGVTEFLPVSSTGHLLLAERFFHLGEGAFWDSFTVLIQLGAILAIVGLYFKKLWDVVIGFFTGDTYSRRFVIGVLVAFLPAVVVGLVAGKYIKSVLFNPWVVCFTLIVGGAILLWVDKLDLKPREHDATRFPLLMYLYIGIAQCVAMIPGVSRSGASIVAAMLLGADKRAAAEFSFFLAIPTMIGAFAYDFYKNRSEMTMDHMGIVAIGFVVSFITAVIVVKTFLTYVTRHGFVVFAWWRVIVGTLGLIALALGR.

Transmembrane regions (helical) follow at residues 8-28 (VILGIIEGVTEFLPVSSTGHL), 41-61 (AFWDSFTVLIQLGAILAIVGL), 83-103 (FVIGVLVAFLPAVVVGLVAGK), 108-128 (VLFNPWVVCFTLIVGGAILLW), 144-164 (FPLLMYLYIGIAQCVAMIPGV), 184-204 (AAEFSFFLAIPTMIGAFAYDF), 218-238 (IVAIGFVVSFITAVIVVKTFL), and 246-266 (FVVFAWWRVIVGTLGLIALAL).

It belongs to the UppP family.

It localises to the cell inner membrane. The catalysed reaction is di-trans,octa-cis-undecaprenyl diphosphate + H2O = di-trans,octa-cis-undecaprenyl phosphate + phosphate + H(+). In terms of biological role, catalyzes the dephosphorylation of undecaprenyl diphosphate (UPP). Confers resistance to bacitracin. The polypeptide is Undecaprenyl-diphosphatase (Bradyrhizobium diazoefficiens (strain JCM 10833 / BCRC 13528 / IAM 13628 / NBRC 14792 / USDA 110)).